We begin with the raw amino-acid sequence, 246 residues long: Ubiquitin-conjugating enzyme E2 6 (246 aa).

Topologically, residues 1–224 (MATKQAQKRL…LEKQHNDKPN (224 aa)) are cytoplasmic. The UBC core domain occupies 5–154 (QAQKRLTKEY…FNSTRFKLVF (150 aa)). The active-site Glycyl thioester intermediate is the Cys-87. The helical transmembrane segment at 225–245 (GSSSMFYIGVALFLFLVGLFM) threads the bilayer.

The protein belongs to the ubiquitin-conjugating enzyme family.

Its subcellular location is the endoplasmic reticulum membrane. The catalysed reaction is S-ubiquitinyl-[E1 ubiquitin-activating enzyme]-L-cysteine + [E2 ubiquitin-conjugating enzyme]-L-cysteine = [E1 ubiquitin-activating enzyme]-L-cysteine + S-ubiquitinyl-[E2 ubiquitin-conjugating enzyme]-L-cysteine.. It participates in protein modification; protein ubiquitination. In terms of biological role, catalyzes the covalent attachment of ubiquitin to other proteins. Functions in degradation of misfolded or regulated proteins localized in the endoplasmic reticulum (ER) lumen or membrane via the ubiquitin-proteasome system. Cognate E2 conjugating enzyme for the DOA10 ubiquitin ligase complex, which is part of the ERAD-C pathway responsible for the rapid degradation of membrane proteins with misfolded cytoplasmic domains. The chain is Ubiquitin-conjugating enzyme E2 6 (UBC6) from Candida glabrata (strain ATCC 2001 / BCRC 20586 / JCM 3761 / NBRC 0622 / NRRL Y-65 / CBS 138) (Yeast).